The primary structure comprises 421 residues: MYKNLKLNDKYVQKAINSEFKRQRNFIELIASENYVSDDVLKAQGSVLTNKYGEGYPYRRYYGSCENVDMVEQVAIDRLKEIFKVNYANVQPYSGSVANAAAIASVVPNGGKIMGLSLKSGGHLTHGYKISFSGIFYNSITYEVGKNGKLDYEEIKKIALAEKPDLIICGYSAYPRLIDFKKFREIADLCGAKLMADVAHIAGLIAGGVHPSPVGYAHVITSTTHKTFRGARGGVIMTNDEEIAKKVDRWVFPGYQGGPLFHAIAGKAIAFYEALQPSFKTYAENIVKNAKVFSEAFIKKGVEVVSGGTDNHLLLINVKSSYNITGKEAENFLEKINITINKNSIPFDELPPLVTSGIRLGTAAMTSRNFTKWEELAEIIDYSLRNLEFLNSKSKAARDKVKELKNRVLSFNKEFPILKKY.

(6S)-5,6,7,8-tetrahydrofolate-binding positions include Leu118 and 122–124; that span reads GHL. Lys226 bears the N6-(pyridoxal phosphate)lysine mark. Residue Glu242 coordinates (6S)-5,6,7,8-tetrahydrofolate.

Belongs to the SHMT family. In terms of assembly, homodimer. Requires pyridoxal 5'-phosphate as cofactor.

It is found in the cytoplasm. The enzyme catalyses (6R)-5,10-methylene-5,6,7,8-tetrahydrofolate + glycine + H2O = (6S)-5,6,7,8-tetrahydrofolate + L-serine. The protein operates within one-carbon metabolism; tetrahydrofolate interconversion. It participates in amino-acid biosynthesis; glycine biosynthesis; glycine from L-serine: step 1/1. Its function is as follows. Catalyzes the reversible interconversion of serine and glycine with tetrahydrofolate (THF) serving as the one-carbon carrier. This reaction serves as the major source of one-carbon groups required for the biosynthesis of purines, thymidylate, methionine, and other important biomolecules. Also exhibits THF-independent aldolase activity toward beta-hydroxyamino acids, producing glycine and aldehydes, via a retro-aldol mechanism. In Mycoplasmopsis synoviae (strain 53) (Mycoplasma synoviae), this protein is Serine hydroxymethyltransferase.